Consider the following 201-residue polypeptide: Orotate phosphoribosyltransferase (201 aa).

113–121 (EDIITTGKS) is a 5-phospho-alpha-D-ribose 1-diphosphate binding site. The orotate site is built by Thr-117 and Arg-145.

It belongs to the purine/pyrimidine phosphoribosyltransferase family. PyrE subfamily. In terms of assembly, homodimer. Mg(2+) serves as cofactor.

The catalysed reaction is orotidine 5'-phosphate + diphosphate = orotate + 5-phospho-alpha-D-ribose 1-diphosphate. It functions in the pathway pyrimidine metabolism; UMP biosynthesis via de novo pathway; UMP from orotate: step 1/2. In terms of biological role, catalyzes the transfer of a ribosyl phosphate group from 5-phosphoribose 1-diphosphate to orotate, leading to the formation of orotidine monophosphate (OMP). The polypeptide is Orotate phosphoribosyltransferase (Helicobacter pylori (strain P12)).